Here is a 550-residue protein sequence, read N- to C-terminus: Cell pattern formation-associated protein STUA (550 aa).

Residues 86–192 enclose the HTH APSES-type domain; sequence RVTATLWEDE…HNIGALLYHP (107 aa). Residues 120-141 constitute a DNA-binding region (H-T-H motif); it reads GTKLLNVAGMTRGRRDGILKSE. The span at 246-266 shows a compositional bias: polar residues; the sequence is SLANGPQSLASTPQPLTNGSQ. Disordered stretches follow at residues 246-277, 371-412, 447-467, and 527-550; these read SLAN…GMLK, HHQP…VKRR, KRRD…DHLN, and APVY…QSFG. The span at 385-395 shows a compositional bias: basic and acidic residues; that stretch reads RGRDEDDDVHR. The nuclear localization domain stretch occupies residues 517-546; sequence TVAASPSYPSAPVYDTGARPPSAISAPRRQ.

The protein belongs to the EFG1/PHD1/stuA family.

Its subcellular location is the nucleus. Transcription factor that regulates asexual reproduction. Binds the StuA-response elements (StRE) with the consensus sequence 5'-(A/T)CGCG(T/A)N(A/C)-3' at the promoters of target genes. Differentially regulates the development of macroconidia, microconidia, and chlamydospores. Acts as a positive regulator for the development of macroconidia and as a negative regulator for the development of chlamydospores. Involved in microconidium formation specifically in infected plants. The sequence is that of Cell pattern formation-associated protein STUA from Fusarium oxysporum (Fusarium vascular wilt).